A 620-amino-acid polypeptide reads, in one-letter code: Synchronized import protein 1 (620 aa).

The tract at residues 1 to 32 (MGRSKKRSRASSSRLNPLRKAGSNDNNKDTNV) is disordered. ARM repeat units lie at residues 25–64 (DNNKDTNVVNKKLQPLLQNLSSVVPNDRSIALSSISVLCE), 66–106 (AHMR…NLSL), 181–221 (DDIL…TTLD), 258–299 (ANEL…NIDP), 340–386 (IKLQ…NFLP), 435–470 (DSQDDLSIKIGRMGCIWALLKLIFPDGAFESENRAL), 471–510 (INVQMLNNSGFARGIIEEFQNNNDLELQQKCINVLSTYAM), and 564–607 (RGGF…TLDS).

This sequence belongs to the nuclear import and ribosome assembly adapter family. Forms a heterotrimeric complex with RPL5 and RPL11A or RPL11B; interaction of this complex with KAP104 allows the nuclear import of the heterotrimer. Component of a hexameric 5S RNP precursor complex, composed of 5S RNA, RRS1, RPF2, RPL5, RPL11A/RPL11B and SYO1; this complex acts as a precursor for ribosome assembly.

The protein localises to the cytoplasm. It localises to the nucleus. Nuclear import adapter that specifically recruits the two functionally and topologically linked ribosomal proteins RPL5 and RPL11 (encoded by RPL11A and RPL11B). Guarantees that this cargo pair remains bound together from the time of synthesis in the cytoplasm until delivery to the nascent 5S rRNA in the nucleus. In Saccharomyces cerevisiae (strain ATCC 204508 / S288c) (Baker's yeast), this protein is Synchronized import protein 1 (SYO1).